Here is a 341-residue protein sequence, read N- to C-terminus: Uroporphyrinogen decarboxylase (341 aa).

Substrate contacts are provided by residues 23-27 (RQAGR), Asp-73, Tyr-148, Ser-203, and His-318.

This sequence belongs to the uroporphyrinogen decarboxylase family. In terms of assembly, homodimer.

Its subcellular location is the cytoplasm. It catalyses the reaction uroporphyrinogen III + 4 H(+) = coproporphyrinogen III + 4 CO2. It participates in porphyrin-containing compound metabolism; protoporphyrin-IX biosynthesis; coproporphyrinogen-III from 5-aminolevulinate: step 4/4. Functionally, catalyzes the decarboxylation of four acetate groups of uroporphyrinogen-III to yield coproporphyrinogen-III. The protein is Uroporphyrinogen decarboxylase of Brucella suis (strain ATCC 23445 / NCTC 10510).